The primary structure comprises 88 residues: uncharacterized protein (88 aa).

Positions 1–25 (MRAAFWVGCAALLLSACSSEPVQQA) are cleaved as a signal peptide.

This is an uncharacterized protein from Escherichia coli O6:H1 (strain CFT073 / ATCC 700928 / UPEC).